A 493-amino-acid polypeptide reads, in one-letter code: Adenylyltransferase and sulfurtransferase uba4 (493 aa).

ATP contacts are provided by residues Gly99, Asp120, 127-131, Lys144, and 188-189; these read SNLHR and DN. Cys237 and Cys240 together coordinate Zn(2+). Cys254 (glycyl thioester intermediate; for adenylyltransferase activity) is an active-site residue. Zn(2+) contacts are provided by Cys316 and Cys319. One can recognise a Rhodanese domain in the interval 376–491; that stretch reads INKEPTIIDV…WREQIDPDWP (116 aa). Catalysis depends on Cys446, which acts as the Cysteine persulfide intermediate; for sulfurtransferase activity.

This sequence in the N-terminal section; belongs to the HesA/MoeB/ThiF family. UBA4 subfamily. It depends on Zn(2+) as a cofactor.

The protein localises to the cytoplasm. It localises to the cytosol. It carries out the reaction [molybdopterin-synthase sulfur-carrier protein]-C-terminal Gly-Gly + ATP + H(+) = [molybdopterin-synthase sulfur-carrier protein]-C-terminal Gly-Gly-AMP + diphosphate. The enzyme catalyses [molybdopterin-synthase sulfur-carrier protein]-C-terminal Gly-Gly-AMP + S-sulfanyl-L-cysteinyl-[cysteine desulfurase] + AH2 = [molybdopterin-synthase sulfur-carrier protein]-C-terminal-Gly-aminoethanethioate + L-cysteinyl-[cysteine desulfurase] + A + AMP + 2 H(+). It functions in the pathway tRNA modification; 5-methoxycarbonylmethyl-2-thiouridine-tRNA biosynthesis. It participates in cofactor biosynthesis; molybdopterin biosynthesis. In terms of biological role, plays a central role in 2-thiolation of mcm(5)S(2)U at tRNA wobble positions of cytosolic tRNA(Lys), tRNA(Glu) and tRNA(Gln). Also essential during biosynthesis of the molybdenum cofactor. Acts by mediating the C-terminal thiocarboxylation of sulfur carriers urm1 and mocs2a. Its N-terminus first activates urm1 and mocs2a as acyl-adenylates (-COAMP), then the persulfide sulfur on the catalytic cysteine is transferred to urm1 and mocs2a to form thiocarboxylation (-COSH) of their C-terminus. The reaction probably involves hydrogen sulfide that is generated from the persulfide intermediate and that acts as a nucleophile towards urm1 and mocs2a. Subsequently, a transient disulfide bond is formed. Does not use thiosulfate as sulfur donor; nfs1 probably acting as a sulfur donor for thiocarboxylation reactions. The protein is Adenylyltransferase and sulfurtransferase uba4 of Aspergillus fumigatus (strain CBS 144.89 / FGSC A1163 / CEA10) (Neosartorya fumigata).